Here is a 156-residue protein sequence, read N- to C-terminus: Cytochrome c-type biogenesis protein CcmE 1 (156 aa).

The Cytoplasmic portion of the chain corresponds to 1–8; it reads MNATRKQR. Residues 9–29 traverse the membrane as a helical; Signal-anchor for type II membrane protein segment; that stretch reads LWLVIGVLTAAALAVTLIALA. The Periplasmic portion of the chain corresponds to 30-156; the sequence is LQRNMSYLFT…AAAAPLSGVR (127 aa). Residues His-123 and Tyr-127 each contribute to the heme site.

The protein belongs to the CcmE/CycJ family.

The protein resides in the cell inner membrane. In terms of biological role, heme chaperone required for the biogenesis of c-type cytochromes. Transiently binds heme delivered by CcmC and transfers the heme to apo-cytochromes in a process facilitated by CcmF and CcmH. In Xanthomonas campestris pv. campestris (strain 8004), this protein is Cytochrome c-type biogenesis protein CcmE 1.